The sequence spans 245 residues: 1-(5-phosphoribosyl)-5-[(5-phosphoribosylamino)methylideneamino] imidazole-4-carboxamide isomerase (245 aa).

The active-site Proton acceptor is D7. D129 serves as the catalytic Proton donor.

Belongs to the HisA/HisF family.

It is found in the cytoplasm. It carries out the reaction 1-(5-phospho-beta-D-ribosyl)-5-[(5-phospho-beta-D-ribosylamino)methylideneamino]imidazole-4-carboxamide = 5-[(5-phospho-1-deoxy-D-ribulos-1-ylimino)methylamino]-1-(5-phospho-beta-D-ribosyl)imidazole-4-carboxamide. It functions in the pathway amino-acid biosynthesis; L-histidine biosynthesis; L-histidine from 5-phospho-alpha-D-ribose 1-diphosphate: step 4/9. The protein is 1-(5-phosphoribosyl)-5-[(5-phosphoribosylamino)methylideneamino] imidazole-4-carboxamide isomerase of Tolumonas auensis (strain DSM 9187 / NBRC 110442 / TA 4).